Consider the following 554-residue polypeptide: CTP synthase (554 aa).

The tract at residues 1–279 (MSQPRAEHVT…DAFLIRRLDL (279 aa)) is amidoligase domain. CTP is bound at residue S21. A UTP-binding site is contributed by S21. ATP-binding positions include 22 to 27 (SLGKGL) and D79. Residues D79 and E153 each coordinate Mg(2+). CTP is bound by residues 160-162 (DIE), 200-205 (KTKPTQ), and K236. UTP is bound by residues 200–205 (KTKPTQ) and K236. In terms of domain architecture, Glutamine amidotransferase type-1 spans 304 to 551 (TVALVGKYID…VKAGLKHKND (248 aa)). G367 is an L-glutamine binding site. C394 (nucleophile; for glutamine hydrolysis) is an active-site residue. L-glutamine is bound by residues 395–398 (LGLQ), E417, and R478. Catalysis depends on residues H524 and E526.

The protein belongs to the CTP synthase family. As to quaternary structure, homotetramer.

The enzyme catalyses UTP + L-glutamine + ATP + H2O = CTP + L-glutamate + ADP + phosphate + 2 H(+). It catalyses the reaction L-glutamine + H2O = L-glutamate + NH4(+). It carries out the reaction UTP + NH4(+) + ATP = CTP + ADP + phosphate + 2 H(+). It functions in the pathway pyrimidine metabolism; CTP biosynthesis via de novo pathway; CTP from UDP: step 2/2. Allosterically activated by GTP, when glutamine is the substrate; GTP has no effect on the reaction when ammonia is the substrate. The allosteric effector GTP functions by stabilizing the protein conformation that binds the tetrahedral intermediate(s) formed during glutamine hydrolysis. Inhibited by the product CTP, via allosteric rather than competitive inhibition. Functionally, catalyzes the ATP-dependent amination of UTP to CTP with either L-glutamine or ammonia as the source of nitrogen. Regulates intracellular CTP levels through interactions with the four ribonucleotide triphosphates. This Corynebacterium kroppenstedtii (strain DSM 44385 / JCM 11950 / CIP 105744 / CCUG 35717) protein is CTP synthase.